The sequence spans 123 residues: Large ribosomal subunit protein uL18 (123 aa).

This sequence belongs to the universal ribosomal protein uL18 family. Part of the 50S ribosomal subunit; part of the 5S rRNA/L5/L18/L25 subcomplex. Contacts the 5S and 23S rRNAs.

Its function is as follows. This is one of the proteins that bind and probably mediate the attachment of the 5S RNA into the large ribosomal subunit, where it forms part of the central protuberance. The polypeptide is Large ribosomal subunit protein uL18 (Wolbachia sp. subsp. Brugia malayi (strain TRS)).